Reading from the N-terminus, the 523-residue chain is Galactarate dehydratase (L-threo-forming) (523 aa).

This sequence belongs to the UxaA family. Homodimer. Fe(2+) is required as a cofactor.

It carries out the reaction galactarate = 5-dehydro-4-deoxy-D-glucarate + H2O. Its pathway is carbohydrate acid metabolism; galactarate degradation; D-glycerate from galactarate: step 1/3. Its function is as follows. Catalyzes the dehydration of galactarate to form 5-dehydro-4-deoxy-D-glucarate (5-KDG). In Escherichia coli (strain K12), this protein is Galactarate dehydratase (L-threo-forming).